The chain runs to 495 residues: Glycerol kinase (495 aa).

Thr11 is a binding site for ADP. 3 residues coordinate ATP: Thr11, Thr12, and Ser13. Thr11 serves as a coordination point for sn-glycerol 3-phosphate. Arg15 contacts ADP. Arg81, Glu82, Tyr133, and Asp242 together coordinate sn-glycerol 3-phosphate. Arg81, Glu82, Tyr133, Asp242, and Gln243 together coordinate glycerol. ADP is bound by residues Thr264 and Gly307. The ATP site is built by Thr264, Gly307, Gln311, and Gly408. 2 residues coordinate ADP: Gly408 and Asn412.

Belongs to the FGGY kinase family.

It carries out the reaction glycerol + ATP = sn-glycerol 3-phosphate + ADP + H(+). Its pathway is polyol metabolism; glycerol degradation via glycerol kinase pathway; sn-glycerol 3-phosphate from glycerol: step 1/1. Inhibited by fructose 1,6-bisphosphate (FBP). In terms of biological role, key enzyme in the regulation of glycerol uptake and metabolism. Catalyzes the phosphorylation of glycerol to yield sn-glycerol 3-phosphate. In Rhodospirillum rubrum (strain ATCC 11170 / ATH 1.1.1 / DSM 467 / LMG 4362 / NCIMB 8255 / S1), this protein is Glycerol kinase.